Here is a 255-residue protein sequence, read N- to C-terminus: Imidazole glycerol phosphate synthase subunit HisF (255 aa).

Residues Asp12 and Asp131 contribute to the active site.

Belongs to the HisA/HisF family. In terms of assembly, heterodimer of HisH and HisF.

It is found in the cytoplasm. It carries out the reaction 5-[(5-phospho-1-deoxy-D-ribulos-1-ylimino)methylamino]-1-(5-phospho-beta-D-ribosyl)imidazole-4-carboxamide + L-glutamine = D-erythro-1-(imidazol-4-yl)glycerol 3-phosphate + 5-amino-1-(5-phospho-beta-D-ribosyl)imidazole-4-carboxamide + L-glutamate + H(+). It participates in amino-acid biosynthesis; L-histidine biosynthesis; L-histidine from 5-phospho-alpha-D-ribose 1-diphosphate: step 5/9. Its function is as follows. IGPS catalyzes the conversion of PRFAR and glutamine to IGP, AICAR and glutamate. The HisF subunit catalyzes the cyclization activity that produces IGP and AICAR from PRFAR using the ammonia provided by the HisH subunit. This chain is Imidazole glycerol phosphate synthase subunit HisF, found in Neisseria gonorrhoeae (strain ATCC 700825 / FA 1090).